The primary structure comprises 602 residues: Protein indeterminate-domain 5, chloroplastic (602 aa).

Composition is skewed to low complexity over residues 1-10 (MAASSSSAAS) and 21-30 (HLLPPNSSAA). A chloroplast-targeting transit peptide spans 1–50 (MAASSSSAASFFGVRQDDQSHLLPPNSSAAAPPPPPPHHQAPLPPLEAPP). The tract at residues 1-65 (MAASSSSAAS…NQPRTPNSDA (65 aa)) is disordered. The segment covering 31-48 (APPPPPPHHQAPLPPLEA) has biased composition (pro residues). Thr-60 carries the post-translational modification Phosphothreonine. Ser-71 bears the Phosphoserine mark. 2 C2H2-type zinc fingers span residues 81–103 (FICE…RRGH) and 122–152 (YLCP…YRKH). The segment at 157–180 (WKCDKCSKRYAVQSDWKAHSKTCG) adopts a C2H2-type 2; degenerate zinc-finger fold. Zn(2+)-binding residues include Cys-159, Cys-162, His-175, Cys-179, Cys-186, Cys-188, His-201, and Cys-205. A CCHC-type 2; atypical zinc finger spans residues 184–207 (YRCDCGTLFSRRDSFITHRAFCDA). The interval 194–206 (RRDSFITHRAFCD) is SHR-binding. Disordered regions lie at residues 443-467 (KAAQ…NNAS) and 537-602 (KSMS…HASF). Composition is skewed to low complexity over residues 448–467 (GSTS…NNAS), 546–560 (QQQQ…QQQQ), and 570–579 (SSSDSADRSS).

In terms of assembly, binds to RGA and SCL3 competitively. In terms of tissue distribution, highly expressed in leaf tissues.

It localises to the plastid. The protein resides in the chloroplast. Its function is as follows. Transcription factor acting as a positive regulator of the starch synthase SS4. Controls chloroplast development and starch granule formation. Binds DNA via its zinc fingers. Recognizes and binds to SCL3 promoter sequence 5'-AGACAA-3' to promote its expression when in complex with RGA. The sequence is that of Protein indeterminate-domain 5, chloroplastic from Arabidopsis thaliana (Mouse-ear cress).